The primary structure comprises 338 residues: Glycerol-3-phosphate dehydrogenase [NAD(P)+] (338 aa).

NADPH-binding residues include Ser12, Trp13, and Lys110. Residues Lys110, Gly141, and Ser143 each coordinate sn-glycerol 3-phosphate. Ala145 is a binding site for NADPH. Residues Lys196, Asp249, Ser259, Arg260, and Asn261 each contribute to the sn-glycerol 3-phosphate site. Catalysis depends on Lys196, which acts as the Proton acceptor. An NADPH-binding site is contributed by Arg260. Positions 284 and 286 each coordinate NADPH.

It belongs to the NAD-dependent glycerol-3-phosphate dehydrogenase family.

Its subcellular location is the cytoplasm. It catalyses the reaction sn-glycerol 3-phosphate + NAD(+) = dihydroxyacetone phosphate + NADH + H(+). The catalysed reaction is sn-glycerol 3-phosphate + NADP(+) = dihydroxyacetone phosphate + NADPH + H(+). It functions in the pathway membrane lipid metabolism; glycerophospholipid metabolism. In terms of biological role, catalyzes the reduction of the glycolytic intermediate dihydroxyacetone phosphate (DHAP) to sn-glycerol 3-phosphate (G3P), the key precursor for phospholipid synthesis. The chain is Glycerol-3-phosphate dehydrogenase [NAD(P)+] from Pediococcus pentosaceus (strain ATCC 25745 / CCUG 21536 / LMG 10740 / 183-1w).